A 509-amino-acid chain; its full sequence is L-arabinose isomerase (509 aa).

4 residues coordinate Mn(2+): E313, E340, H357, and H456.

It belongs to the arabinose isomerase family. It depends on Mn(2+) as a cofactor.

The enzyme catalyses beta-L-arabinopyranose = L-ribulose. Its pathway is carbohydrate degradation; L-arabinose degradation via L-ribulose; D-xylulose 5-phosphate from L-arabinose (bacterial route): step 1/3. Catalyzes the conversion of L-arabinose to L-ribulose. This chain is L-arabinose isomerase, found in Phocaeicola vulgatus (strain ATCC 8482 / DSM 1447 / JCM 5826 / CCUG 4940 / NBRC 14291 / NCTC 11154) (Bacteroides vulgatus).